Consider the following 225-residue polypeptide: UPF0758 protein NMB1038 (225 aa).

Residues 102 to 224 (VLSDPDTVAD…VCSFRQLGLM (123 aa)) form the MPN domain. H173, H175, and D186 together coordinate Zn(2+). A JAMM motif motif is present at residues 173 to 186 (HNHPGGSPEPSQED).

This sequence belongs to the UPF0758 family.

In Neisseria meningitidis serogroup B (strain ATCC BAA-335 / MC58), this protein is UPF0758 protein NMB1038.